The chain runs to 952 residues: UvrABC system protein A (952 aa).

38-45 contributes to the ATP binding site; the sequence is GLSGSGKS. The C4-type zinc finger occupies 259–286; that stretch reads CDKCGFSISELEPRLFSFNSPLGSCSYC. ABC transporter domains follow at residues 316-595 and 615-944; these read FKNI…SNSI and GNGK…QYLS. Residue 647-654 participates in ATP binding; the sequence is GVSGSGKS. Residues 746 to 772 form a C4-type zinc finger; sequence CDKCFGDGVIRIEMHFLPDVYVKCEVC.

Belongs to the ABC transporter superfamily. UvrA family. As to quaternary structure, forms a heterotetramer with UvrB during the search for lesions.

The protein resides in the cytoplasm. Its function is as follows. The UvrABC repair system catalyzes the recognition and processing of DNA lesions. UvrA is an ATPase and a DNA-binding protein. A damage recognition complex composed of 2 UvrA and 2 UvrB subunits scans DNA for abnormalities. When the presence of a lesion has been verified by UvrB, the UvrA molecules dissociate. In Mycoplasma genitalium (strain ATCC 33530 / DSM 19775 / NCTC 10195 / G37) (Mycoplasmoides genitalium), this protein is UvrABC system protein A.